Consider the following 479-residue polypeptide: Protein phosphatase 1B (479 aa).

Basic and acidic residues predominate over residues 1 to 14 (MGAFLDKPKTEKHN). The interval 1-20 (MGAFLDKPKTEKHNAHGAGN) is disordered. Gly2 carries N-myristoyl glycine lipidation. Lys12 is covalently cross-linked (Glycyl lysine isopeptide (Lys-Gly) (interchain with G-Cter in ISG15)). In terms of domain architecture, PPM-type phosphatase spans 23–295 (RYGLSSMQGW…DNMSIVLVCF (273 aa)). Positions 60 and 61 each coordinate Mn(2+). A Glycyl lysine isopeptide (Lys-Gly) (interchain with G-Cter in ISG15) cross-link involves residue Lys142. 2 residues coordinate Mn(2+): Asp243 and Asp286. The residue at position 386 (Ser386) is a Phosphoserine. A disordered region spans residues 423-479 (VEGEESPAEPAATATSSNSDAGNPVTMQESHTESESGLAELDSSNEDAGTKMSGEKI). Low complexity predominate over residues 430–439 (AEPAATATSS). Residues 440–451 (NSDAGNPVTMQE) are compositionally biased toward polar residues.

It belongs to the PP2C family. As to quaternary structure, monomer. Interacts with PAK6. Interacts with the phosphorylated form of IKBKB/IKKB. The cofactor is Mg(2+). It depends on Mn(2+) as a cofactor. Isgylation negatively regulates its activity. Post-translationally, N-myristoylation is essential for the recognition of its substrates for dephosphorylation. In terms of tissue distribution, highly expressed in heart and skeletal muscle.

It localises to the cytoplasm. Its subcellular location is the cytosol. The protein localises to the membrane. It carries out the reaction O-phospho-L-seryl-[protein] + H2O = L-seryl-[protein] + phosphate. The enzyme catalyses O-phospho-L-threonyl-[protein] + H2O = L-threonyl-[protein] + phosphate. Enzyme with a broad specificity. Dephosphorylates CDK2 and CDK6 in vitro. Dephosphorylates PRKAA1 and PRKAA2. Inhibits TBK1-mediated antiviral signaling by dephosphorylating it at 'Ser-172'. Plays an important role in the termination of TNF-alpha-mediated NF-kappa-B activation through dephosphorylating and inactivating IKBKB/IKKB. The sequence is that of Protein phosphatase 1B (PPM1B) from Homo sapiens (Human).